We begin with the raw amino-acid sequence, 447 residues long: Na(+)-translocating NADH-quinone reductase subunit A (447 aa).

It belongs to the NqrA family. In terms of assembly, composed of six subunits; NqrA, NqrB, NqrC, NqrD, NqrE and NqrF.

The enzyme catalyses a ubiquinone + n Na(+)(in) + NADH + H(+) = a ubiquinol + n Na(+)(out) + NAD(+). Its function is as follows. NQR complex catalyzes the reduction of ubiquinone-1 to ubiquinol by two successive reactions, coupled with the transport of Na(+) ions from the cytoplasm to the periplasm. NqrA to NqrE are probably involved in the second step, the conversion of ubisemiquinone to ubiquinol. This Neisseria meningitidis serogroup A / serotype 4A (strain DSM 15465 / Z2491) protein is Na(+)-translocating NADH-quinone reductase subunit A.